A 399-amino-acid chain; its full sequence is Arylacetamide deacetylase (399 aa).

The Cytoplasmic segment spans residues 1-4 (MRKK). Residues 5–25 (YFGFLILGVLLAGYIYVPLPD) form a helical; Signal-anchor for type II membrane protein membrane-spanning segment. Residues 26–399 (NVEEPWKIML…QYINWLHENL (374 aa)) are Lumenal-facing. The Involved in the stabilization of the negatively charged intermediate by the formation of the oxyanion hole signature appears at 111-113 (HGG). Cysteine 116 and cysteine 340 are disulfide-bonded. The active site involves serine 189. An N-linked (GlcNAc...) asparagine glycan is attached at asparagine 282. Catalysis depends on residues aspartate 343 and histidine 373.

The protein belongs to the 'GDXG' lipolytic enzyme family.

It localises to the endoplasmic reticulum membrane. The protein resides in the microsome membrane. It carries out the reaction a triacylglycerol + H2O = a diacylglycerol + a fatty acid + H(+). Functionally, displays cellular triglyceride lipase activity in liver, increases the levels of intracellular fatty acids derived from the hydrolysis of newly formed triglyceride stores and plays a role in very low-density lipoprotein assembly. Displays serine esterase activity in liver. Deacetylates a variety of arylacetamide substrates, including xenobiotic compounds and procarcinogens, converting them to the primary arylamide compounds and increasing their toxicity. The sequence is that of Arylacetamide deacetylase (AADAC) from Bos taurus (Bovine).